The primary structure comprises 156 residues: Sensor histidine kinase component HK2 (156 aa).

Topologically, residues 1-42 are extracellular; it reads MALVLAAAGAVTVVQFRDAAHEADPDGALRGLTDDITADLVR. The helical transmembrane segment at 43 to 63 threads the bilayer; sequence ELVTILPIVLVIAAVAAYLLS. The HAMP domain occupies 64 to 120; it reads RAALRPVDRIRAAAQTLTTTPHPDTDAPLPVPPTDDEIAWLATTLNTMLTRLQRALA. Topologically, residues 64 to 156 are cytoplasmic; that stretch reads RAALRPVDRI…RCAGPDPPTS (93 aa). One can recognise a Histidine kinase; first part domain in the interval 128–156; sequence DASHELRTPLALLTTELELRCAGPDPPTS. Phosphohistidine; by autocatalysis is present on H131.

As to quaternary structure, homodimer. Each monomer interacts with HK1 and the receiver domain of TcrA. In terms of processing, phosphorylated by HK1.

The protein resides in the cell membrane. The catalysed reaction is ATP + protein L-histidine = ADP + protein N-phospho-L-histidine.. Functionally, member of the three-protein two-component system HK1/HK2/TcrA. HK2 transfers its phosphoryl group to TcrA. The chain is Sensor histidine kinase component HK2 from Mycobacterium tuberculosis (strain ATCC 25618 / H37Rv).